The primary structure comprises 188 residues: MASTSDIRNGLCIKFNHDIYKIIEFLHVKPGKGPAFVRTKLKSLTSGKVLDNTFSAGHKIDVIRVETHTFQFLYPEGDEFHFMNAETFEQISLNKNILDAPDLLKEGTNVMVQINTETDLPLSVDMPASVILEVTYAEPGVKGNTATNATKNATVETGANVNVPLFINEGDKIKIDTASGSYMERVKE.

The protein belongs to the elongation factor P family.

The protein resides in the cytoplasm. Its pathway is protein biosynthesis; polypeptide chain elongation. Functionally, involved in peptide bond synthesis. Stimulates efficient translation and peptide-bond synthesis on native or reconstituted 70S ribosomes in vitro. Probably functions indirectly by altering the affinity of the ribosome for aminoacyl-tRNA, thus increasing their reactivity as acceptors for peptidyl transferase. This is Elongation factor P from Flavobacterium johnsoniae (strain ATCC 17061 / DSM 2064 / JCM 8514 / BCRC 14874 / CCUG 350202 / NBRC 14942 / NCIMB 11054 / UW101) (Cytophaga johnsonae).